The sequence spans 389 residues: Chalcone synthase 1 (389 aa).

The active site involves cysteine 164.

Belongs to the thiolase-like superfamily. Chalcone/stilbene synthases family.

The catalysed reaction is (E)-4-coumaroyl-CoA + 3 malonyl-CoA + 3 H(+) = 2',4,4',6'-tetrahydroxychalcone + 3 CO2 + 4 CoA. It functions in the pathway secondary metabolite biosynthesis; flavonoid biosynthesis. Functionally, the primary product of this enzyme is 4,2',4',6'-tetrahydroxychalcone (also termed naringenin-chalcone or chalcone) which can under specific conditions spontaneously isomerize into naringenin. The chain is Chalcone synthase 1 (CHS1) from Cicer arietinum (Chickpea).